Here is a 1591-residue protein sequence, read N- to C-terminus: Dicer-like protein 1 (1591 aa).

2 stretches are compositionally biased toward basic and acidic residues: residues 1–20 and 41–52; these read MEVHDGLKSPDKAAKSRYDD and SKPRKISERKRA. Residues 1 to 52 are disordered; it reads MEVHDGLKSPDKAAKSRYDDDRIDQDSEDEAVRLVANPDPSKPRKISERKRA. Residues 115–298 form the Helicase ATP-binding domain; sequence LFERAKQKNT…SYERATHELE (184 aa). Position 128 to 135 (128 to 135) interacts with ATP; the sequence is LDTGTGKT. A DEAH box motif is present at residues 242 to 245; sequence DEAH. The Helicase C-terminal domain occupies 439 to 607; the sequence is KLIEILAECF…CLSLPKDRIM (169 aa). Positions 639-729 constitute a Dicer dsRNA-binding fold domain; sequence SLVVLAEFVA…KSTLAKVLPA (91 aa). Residues 888 to 1012 form the PAZ domain; it reads TTTDRVPYNF…LVLETLLISQ (125 aa). RNase III domains lie at 1050–1190 and 1243–1406; these read IDIA…LTAQ and CSQI…VDTG. Mg(2+) contacts are provided by Glu-1283, Asp-1392, and Glu-1395. Residues 1440 to 1514 form the DRBM domain; that stretch reads THITSIITTQ…AKQAVAIYED (75 aa). Cys-1452, His-1485, Cys-1526, and Cys-1528 together coordinate Zn(2+).

The protein belongs to the helicase family. Dicer subfamily. Mg(2+) serves as cofactor. Mn(2+) is required as a cofactor.

Functionally, dicer-like endonuclease which seems not to be involved in cleaving double-stranded RNA in the RNA interference (RNAi) pathway, contrary to its DCL2 counterpart. The protein is Dicer-like protein 1 (DCL1) of Pyricularia oryzae (strain 70-15 / ATCC MYA-4617 / FGSC 8958) (Rice blast fungus).